A 761-amino-acid chain; its full sequence is Isocyanide synthase xanB (761 aa).

Residues Leu-24–His-128 are disordered. Low complexity predominate over residues Glu-36 to Glu-48. A compositionally biased stretch (polar residues) spans Thr-93–Asn-102. Basic and acidic residues predominate over residues Phe-115–Pro-126.

Belongs to the isocyanide synthase family.

It functions in the pathway secondary metabolite biosynthesis. Isocyanide synthase; part of the gene cluster that mediates the biosynthesis of the isocyanide xanthocillin and its derivatives. The first step of the pathway consists in the conversion of tyrosine into a vinyl-isonitrile intermediate by the isocyanide synthase xanB. Subsequent oxidative dimerization of this intermediate to form xanthocillin may involve the cytochrome P450 monooxygenase xanG, whose expression is coregulated with that of XanB. Xanthocillin can be further modified by the isonitrile hydratase-like protein xanA which introduces N-formyl groups and the methyltransferase xanE which introduces methyl groups, leading to the production of several derivatives including fumiformamide. Finally, fumiformamide can be subject to both oxidative and reductive cyclization to yield melanocins E and F, respectively. This chain is Isocyanide synthase xanB, found in Aspergillus fumigatus (strain ATCC MYA-4609 / CBS 101355 / FGSC A1100 / Af293) (Neosartorya fumigata).